The sequence spans 329 residues: Protein SPATA31F3 (329 aa).

A helical membrane pass occupies residues 11 to 31 (VGYSVYTYGSIFIIALIIWQV). A coiled-coil region spans residues 58–85 (SDRATRAKRTSKEEAEKLQKLLDTMKSQ). 3 disordered regions span residues 149 to 184 (ADRS…RSAT), 201 to 250 (QQLD…AAPT), and 288 to 329 (KPMT…KRNI). Phosphoserine occurs at positions 152 and 153. Composition is skewed to polar residues over residues 154–184 (ELTY…RSAT) and 201–223 (QQLD…SSTD). Residues 232 to 242 (QKKRKKTKKLA) show a composition bias toward basic residues. The span at 293 to 320 (EPEKTHSPVRDQAEGAEKKKKPECDLKA) shows a compositional bias: basic and acidic residues.

This sequence belongs to the SPATA31 family.

Its subcellular location is the membrane. The polypeptide is Protein SPATA31F3 (Rattus norvegicus (Rat)).